Consider the following 198-residue polypeptide: Holliday junction branch migration complex subunit RuvA (198 aa).

The domain I stretch occupies residues 1-63 (MYDYIKGQLT…EDAHLLFGFH (63 aa)). The tract at residues 64–142 (TEDEKDVFLK…EAPQETGHTK (79 aa)) is domain II. Positions 143–147 (ARSNK) are flexible linker. Residues 148–198 (AGNTQLDEAIEALLALGYKATELKKIRAFFEGTSETAEQYIKSALKLLMKG) form a domain III region.

This sequence belongs to the RuvA family. As to quaternary structure, homotetramer. Forms an RuvA(8)-RuvB(12)-Holliday junction (HJ) complex. HJ DNA is sandwiched between 2 RuvA tetramers; dsDNA enters through RuvA and exits via RuvB. An RuvB hexamer assembles on each DNA strand where it exits the tetramer. Each RuvB hexamer is contacted by two RuvA subunits (via domain III) on 2 adjacent RuvB subunits; this complex drives branch migration. In the full resolvosome a probable DNA-RuvA(4)-RuvB(12)-RuvC(2) complex forms which resolves the HJ.

It is found in the cytoplasm. Functionally, the RuvA-RuvB-RuvC complex processes Holliday junction (HJ) DNA during genetic recombination and DNA repair, while the RuvA-RuvB complex plays an important role in the rescue of blocked DNA replication forks via replication fork reversal (RFR). RuvA specifically binds to HJ cruciform DNA, conferring on it an open structure. The RuvB hexamer acts as an ATP-dependent pump, pulling dsDNA into and through the RuvAB complex. HJ branch migration allows RuvC to scan DNA until it finds its consensus sequence, where it cleaves and resolves the cruciform DNA. The protein is Holliday junction branch migration complex subunit RuvA of Streptococcus pyogenes serotype M6 (strain ATCC BAA-946 / MGAS10394).